The chain runs to 144 residues: Large ribosomal subunit protein uL16 (144 aa).

The protein belongs to the universal ribosomal protein uL16 family. In terms of assembly, part of the 50S ribosomal subunit.

Its function is as follows. Binds 23S rRNA and is also seen to make contacts with the A and possibly P site tRNAs. This is Large ribosomal subunit protein uL16 from Caldanaerobacter subterraneus subsp. tengcongensis (strain DSM 15242 / JCM 11007 / NBRC 100824 / MB4) (Thermoanaerobacter tengcongensis).